A 198-amino-acid chain; its full sequence is MDSLSQSSRLECQICFNYFSQRRLPKLLHCQHTCCSVCLSQMRLSQREIRCPWCRCVTQIPIGLSVSHLPDDPEVLSVISVSQSSEHTPIFIHLPNNGCYLLPVSLDTDGTPLPGQPTCHVGPKSIGVFDVSDGQNHVLGHDGLGDGMEEEEVVVVKTTAWTGVCTVLLVAFILIFLLGIVLHNMSCVSKRFTIISCG.

An RING-type zinc finger spans residues 12–55; it reads CQICFNYFSQRRLPKLLHCQHTCCSVCLSQMRLSQREIRCPWCR. Residues 162 to 182 form a helical membrane-spanning segment; that stretch reads TGVCTVLLVAFILIFLLGIVL.

It belongs to the RNF152 family.

The protein resides in the lysosome membrane. It catalyses the reaction S-ubiquitinyl-[E2 ubiquitin-conjugating enzyme]-L-cysteine + [acceptor protein]-L-lysine = [E2 ubiquitin-conjugating enzyme]-L-cysteine + N(6)-ubiquitinyl-[acceptor protein]-L-lysine.. Its pathway is protein modification; protein ubiquitination. Its function is as follows. E3 ubiquitin-protein ligase that acts as a negative regulator of mTORC1 signaling by mediating ubiquitination of RagA/RRAGA and RHEB. Catalyzes 'Lys-63'-linked polyubiquitination of RagA/RRAGA in response to amino acid starvation, thereby regulating mTORC1 signaling. Also mediates monoubiquitination of RHEB, promoting its association with the TSC-TBC complex and subsequent inhibition. Also mediates 'Lys-48'-linked polyubiquitination of target proteins and their subsequent targeting to the proteasome for degradation. This Danio rerio (Zebrafish) protein is E3 ubiquitin-protein ligase rnf152.